The following is a 92-amino-acid chain: Small ribosomal subunit protein bS6 (92 aa).

Belongs to the bacterial ribosomal protein bS6 family.

Binds together with bS18 to 16S ribosomal RNA. The polypeptide is Small ribosomal subunit protein bS6 (Clostridioides difficile (strain 630) (Peptoclostridium difficile)).